The chain runs to 74 residues: MGKVRIRLVKRTARKLLEKYPDLFTGDFEHNKRVVSQLIEYRSKKLRNQIAGYITHLVNMASKRKKAEEASARI.

The protein belongs to the eukaryotic ribosomal protein eS17 family.

The polypeptide is Small ribosomal subunit protein eS17 (Aeropyrum pernix (strain ATCC 700893 / DSM 11879 / JCM 9820 / NBRC 100138 / K1)).